The chain runs to 182 residues: MSDNLTMHGTTIVTVRKGGKVVIAGDGQVSLGQTVMKGNARKVRRIGKGNVIAGFAGATADAFTLLERLEKKLEQYPDQLMRASVELAKDWRTDRYLRRLEAMMLVADKNVTLALTGTGDVLEPEEGVMAIGSGGNYALAAARALIDTDKSAEEIARKAMEIAASICVYTNSNIIVETLDAG.

Thr-10 is a catalytic residue. Ala-164, Cys-167, and Thr-170 together coordinate Na(+).

Belongs to the peptidase T1B family. HslV subfamily. In terms of assembly, a double ring-shaped homohexamer of HslV is capped on each side by a ring-shaped HslU homohexamer. The assembly of the HslU/HslV complex is dependent on binding of ATP.

Its subcellular location is the cytoplasm. The catalysed reaction is ATP-dependent cleavage of peptide bonds with broad specificity.. Its activity is regulated as follows. Allosterically activated by HslU binding. Its function is as follows. Protease subunit of a proteasome-like degradation complex believed to be a general protein degrading machinery. The chain is ATP-dependent protease subunit HslV from Chelativorans sp. (strain BNC1).